The chain runs to 329 residues: Beta-tectorin (329 aa).

An N-terminal signal peptide occupies residues 1–17; it reads MVTKAFVLLAIFAEASA. Residues 19-283 enclose the ZP domain; sequence SCAPNKADVI…LSCPVTCDKR (265 aa). Residues Asn-80, Asn-104, Asn-116, and Asn-145 are each glycosylated (N-linked (GlcNAc...) asparagine). An intrachain disulfide couples Cys-204 to Cys-264. Gly-305 carries GPI-anchor amidated glycine lipidation. Positions 306–329 are cleaved as a propeptide — removed in mature form; it reads FSSLYSFSDVLHHLIMMLGICAVL.

As to quaternary structure, may form homomeric filament after self-association or heteromeric filament after association with alpha-tectorin. Interacts with CEACAM16. In terms of processing, the presence of a hydrophobic C-terminus preceded by a potential cleavage site strongly suggests that tectorins are synthesized as glycosylphosphatidylinositol-linked, membrane-bound precursors. Tectorins are targeted to the apical surface of the inner ear epithelia by the lipid and proteolytically released into the extracellular compartment.

Its subcellular location is the cell membrane. The protein localises to the secreted. It localises to the extracellular space. The protein resides in the extracellular matrix. In terms of biological role, one of the major non-collagenous components of the tectorial membrane. The tectorial membrane is an extracellular matrix of the inner ear that covers the neuroepithelium of the cochlea and contacts the stereocilia bundles of specialized sensory hair cells. Sound induces movement of these hair cells relative to the tectorial membrane, deflects the stereocilia and leads to fluctuations in hair-cell membrane potential, transducing sound into electrical signals. The polypeptide is Beta-tectorin (TECTB) (Homo sapiens (Human)).